The following is a 280-amino-acid chain: Transcription factor ovo-like homolog lin-48 (280 aa).

C2H2-type zinc fingers lie at residues 133–155 (LTCH…IKCH), 161–183 (YLCT…TRTH), 189–212 (YKCE…RKVH), and 228–251 (FVCE…KVVH).

It localises to the nucleus. Functionally, transcription factor. Involved in development of the hindgut, the male tail, and the excretory duct cell. Involved in modulating function of excretory duct cells. Plays a role in left/right patterning of cell fates in the hindgut. The sequence is that of Transcription factor ovo-like homolog lin-48 from Caenorhabditis elegans.